Reading from the N-terminus, the 89-residue chain is Small ribosomal subunit protein uS17 (89 aa).

This sequence belongs to the universal ribosomal protein uS17 family. Part of the 30S ribosomal subunit.

Functionally, one of the primary rRNA binding proteins, it binds specifically to the 5'-end of 16S ribosomal RNA. In Chlorobium chlorochromatii (strain CaD3), this protein is Small ribosomal subunit protein uS17.